The following is a 254-amino-acid chain: UPF0328 protein ECU01_0070/ECU01_1540/ECU02_1570/ECU04_0080/ECU08_2100 (254 aa).

Belongs to the UPF0328 family.

The sequence is that of UPF0328 protein ECU01_0070/ECU01_1540/ECU02_1570/ECU04_0080/ECU08_2100 from Encephalitozoon cuniculi (strain GB-M1) (Microsporidian parasite).